Consider the following 205-residue polypeptide: Proteasome subunit beta type-3 (205 aa).

It belongs to the peptidase T1B family. As to quaternary structure, the 26S proteasome consists of a 20S proteasome core and two 19S regulatory subunits. The 20S proteasome core is composed of 28 subunits that are arranged in four stacked rings, resulting in a barrel-shaped structure. The two end rings are each formed by seven alpha subunits, and the two central rings are each formed by seven beta subunits. The catalytic chamber with the active sites is on the inside of the barrel.

The protein resides in the cytoplasm. Its subcellular location is the nucleus. Functionally, non-catalytic component of the proteasome, a multicatalytic proteinase complex which is characterized by its ability to cleave peptides with Arg, Phe, Tyr, Leu, and Glu adjacent to the leaving group at neutral or slightly basic pH. The proteasome has an ATP-dependent proteolytic activity. This is Proteasome subunit beta type-3 (psmb3) from Oncorhynchus mykiss (Rainbow trout).